We begin with the raw amino-acid sequence, 311 residues long: Lipid A biosynthesis acyltransferase (311 aa).

A helical membrane pass occupies residues 19 to 39 (WLFWLGVAIWRSILCLPYPIL). The short motif at 134-139 (HFLTLE) is the HXXXXD motif element.

It belongs to the LpxL/LpxM/LpxP family.

It is found in the cell inner membrane. It catalyses the reaction an alpha-Kdo-(2-&gt;4)-alpha-Kdo-(2-&gt;6)-lipid IVA + a fatty acyl-[ACP] = an alpha-Kdo-(2-&gt;4)-alpha-Kdo-(2-&gt;6)-(acyl)-lipid IVA + holo-[ACP]. It participates in glycolipid biosynthesis; KDO(2)-lipid A biosynthesis; KDO(2)-lipid A from CMP-3-deoxy-D-manno-octulosonate and lipid IV(A): step 3/4. Its pathway is bacterial outer membrane biogenesis; lipopolysaccharide biosynthesis. Its function is as follows. Catalyzes the transfer of an acyl chain from an acyl-[acyl-carrier-protein] (ACP) to a Kdo(2)-lipid IV(A) to form a Kdo(2)-(acyl)-lipid IV(A). This chain is Lipid A biosynthesis acyltransferase, found in Haemophilus influenzae (strain ATCC 51907 / DSM 11121 / KW20 / Rd).